Consider the following 256-residue polypeptide: Imidazole glycerol phosphate synthase subunit HisF (256 aa).

Active-site residues include D11 and D130.

This sequence belongs to the HisA/HisF family. Heterodimer of HisH and HisF.

Its subcellular location is the cytoplasm. The enzyme catalyses 5-[(5-phospho-1-deoxy-D-ribulos-1-ylimino)methylamino]-1-(5-phospho-beta-D-ribosyl)imidazole-4-carboxamide + L-glutamine = D-erythro-1-(imidazol-4-yl)glycerol 3-phosphate + 5-amino-1-(5-phospho-beta-D-ribosyl)imidazole-4-carboxamide + L-glutamate + H(+). It functions in the pathway amino-acid biosynthesis; L-histidine biosynthesis; L-histidine from 5-phospho-alpha-D-ribose 1-diphosphate: step 5/9. Functionally, IGPS catalyzes the conversion of PRFAR and glutamine to IGP, AICAR and glutamate. The HisF subunit catalyzes the cyclization activity that produces IGP and AICAR from PRFAR using the ammonia provided by the HisH subunit. The polypeptide is Imidazole glycerol phosphate synthase subunit HisF (Cupriavidus necator (strain ATCC 17699 / DSM 428 / KCTC 22496 / NCIMB 10442 / H16 / Stanier 337) (Ralstonia eutropha)).